The following is a 155-amino-acid chain: Small ribosomal subunit protein uS7c (155 aa).

It belongs to the universal ribosomal protein uS7 family. Part of the 30S ribosomal subunit.

Its subcellular location is the plastid. It localises to the chloroplast. One of the primary rRNA binding proteins, it binds directly to 16S rRNA where it nucleates assembly of the head domain of the 30S subunit. This Chaetosphaeridium globosum (Charophycean green alga) protein is Small ribosomal subunit protein uS7c (rps7).